The following is a 262-amino-acid chain: 3-methyl-2-oxobutanoate hydroxymethyltransferase (262 aa).

2 residues coordinate Mg(2+): aspartate 43 and aspartate 82. 3-methyl-2-oxobutanoate-binding positions include 43 to 44, aspartate 82, and lysine 111; that span reads DS. Mg(2+) is bound at residue glutamate 113. The Proton acceptor role is filled by glutamate 180.

It belongs to the PanB family. As to quaternary structure, homodecamer; pentamer of dimers. The cofactor is Mg(2+).

It is found in the cytoplasm. It carries out the reaction 3-methyl-2-oxobutanoate + (6R)-5,10-methylene-5,6,7,8-tetrahydrofolate + H2O = 2-dehydropantoate + (6S)-5,6,7,8-tetrahydrofolate. It participates in cofactor biosynthesis; coenzyme A biosynthesis. In terms of biological role, catalyzes the reversible reaction in which hydroxymethyl group from 5,10-methylenetetrahydrofolate is transferred onto alpha-ketoisovalerate to form ketopantoate. The protein is 3-methyl-2-oxobutanoate hydroxymethyltransferase of Pyrobaculum aerophilum (strain ATCC 51768 / DSM 7523 / JCM 9630 / CIP 104966 / NBRC 100827 / IM2).